Consider the following 315-residue polypeptide: Porphobilinogen deaminase (315 aa).

An S-(dipyrrolylmethanemethyl)cysteine modification is found at Cys-251.

The protein belongs to the HMBS family. Monomer. Requires dipyrromethane as cofactor.

The enzyme catalyses 4 porphobilinogen + H2O = hydroxymethylbilane + 4 NH4(+). It participates in porphyrin-containing compound metabolism; protoporphyrin-IX biosynthesis; coproporphyrinogen-III from 5-aminolevulinate: step 2/4. Its function is as follows. Tetrapolymerization of the monopyrrole PBG into the hydroxymethylbilane pre-uroporphyrinogen in several discrete steps. This Sphingopyxis alaskensis (strain DSM 13593 / LMG 18877 / RB2256) (Sphingomonas alaskensis) protein is Porphobilinogen deaminase.